We begin with the raw amino-acid sequence, 703 residues long: Bifunctional arginine dihydrolase/ornithine cyclodeaminase AgrE (703 aa).

Residues Cys10–Val269 form an arginine dihydrolase region. Residues Asn22, Asp65, Asn71, Arg90, and Arg139 each coordinate L-arginine. Asn22 is a binding site for L-ornithine. 3 residues coordinate L-ornithine: Arg90, Arg139, and His168. Catalysis depends on His168, which acts as the Proton donor/acceptor. Residues Asp170 and Ala258 each coordinate L-arginine. L-ornithine is bound at residue Cys264. The active-site Nucleophile is the Cys264. The ornithine cyclodeaminase stretch occupies residues Ser285–Leu694. 10 residues coordinate NAD(+): Asn524, Ala525, Asp603, Ser635, Met636, Leu637, His638, Asp656, Asp679, and Val680.

The protein in the N-terminal section; belongs to the DDAH family. In the C-terminal section; belongs to the AgrE/ArgZ ornithine cyclodeaminase family. Homotetramer. Requires NAD(+) as cofactor.

The enzyme catalyses L-arginine + 2 H2O + 2 H(+) = L-ornithine + 2 NH4(+) + CO2. It catalyses the reaction L-ornithine = L-proline + NH4(+). With respect to regulation, ornithine cyclodeaminase activity is inhibited by ATP. Its function is as follows. Bifunctional enzyme involved in a cyanobacterial arginine utilization pathway that produces glutamate and enables cellular adaptation to nitrogen fluctuations. Catalyzes the hydrolysis of arginine to ornithine, with the release of ammonia and carbon dioxide. Then, catalyzes the conversion of ornithine to proline, with the release of ammonia. This is Bifunctional arginine dihydrolase/ornithine cyclodeaminase AgrE from Nostoc sp. (strain PCC 7120 / SAG 25.82 / UTEX 2576).